Reading from the N-terminus, the 226-residue chain is Late protein I226R (226 aa).

Positions 1–16 (MKMETFLVCLFHNAKG) are cleaved as a signal peptide. Asn164 carries N-linked (GlcNAc...) asparagine; by host glycosylation.

This sequence belongs to the asfivirus I226R family.

Functionally, plays a role in the inhibition of host NF-kappa-B and IRF3 signaling pathways. Mechanistically, promotes the degradation of host IKBKG through enhancing its ubiquitination leading to inhibition of both pathways. The sequence is that of Late protein I226R from Ornithodoros (relapsing fever ticks).